We begin with the raw amino-acid sequence, 33 residues long: Beta/kappa-theraphotoxin-Hlv1a (33 aa).

Cystine bridges form between Cys2/Cys17, Cys9/Cys22, and Cys16/Cys29. At Ile33 the chain carries Isoleucine amide.

The protein belongs to the neurotoxin 10 (Hwtx-1) family. 11 (haplotoxin-2) subfamily. As to expression, expressed by the venom gland.

Its subcellular location is the secreted. Its function is as follows. Spider venom neurotoxin that blocks voltage-gated sodium channel Nav1.3/SCN3A in human (IC(50)=80 nM) and rat (IC(50)=160 nM). Partially inhibits human Kv11.1/KCNH2/ERG (25% at 175 uM). This Cyriopagopus lividus (Cobalt blue tarantula) protein is Beta/kappa-theraphotoxin-Hlv1a.